Here is a 765-residue protein sequence, read N- to C-terminus: Ankyrin repeat and protein kinase domain-containing protein 1 (765 aa).

In terms of domain architecture, Protein kinase spans glutamate 22–leucine 289. ATP is bound by residues valine 28–valine 36 and lysine 51. Aspartate 145 serves as the catalytic Proton acceptor. ANK repeat units lie at residues asparagine 361–cysteine 390, serine 394–arginine 423, aspartate 427–alanine 456, glutamate 460–leucine 489, glutamate 493–alanine 522, asparagine 526–alanine 555, serine 559–leucine 588, glutamine 592–alanine 621, valine 625–alanine 654, serine 658–alanine 687, valine 691–valine 720, and valine 724–threonine 753.

Belongs to the protein kinase superfamily. TKL Ser/Thr protein kinase family. In terms of tissue distribution, highly expressed in brain and weakly expressed in placenta and spinal cord.

The enzyme catalyses L-seryl-[protein] + ATP = O-phospho-L-seryl-[protein] + ADP + H(+). It carries out the reaction L-threonyl-[protein] + ATP = O-phospho-L-threonyl-[protein] + ADP + H(+). The protein is Ankyrin repeat and protein kinase domain-containing protein 1 (ANKK1) of Homo sapiens (Human).